The chain runs to 364 residues: Histidinol-phosphate aminotransferase (364 aa).

Lys226 bears the N6-(pyridoxal phosphate)lysine mark.

Belongs to the class-II pyridoxal-phosphate-dependent aminotransferase family. Histidinol-phosphate aminotransferase subfamily. In terms of assembly, homodimer. The cofactor is pyridoxal 5'-phosphate.

It carries out the reaction L-histidinol phosphate + 2-oxoglutarate = 3-(imidazol-4-yl)-2-oxopropyl phosphate + L-glutamate. The protein operates within amino-acid biosynthesis; L-histidine biosynthesis; L-histidine from 5-phospho-alpha-D-ribose 1-diphosphate: step 7/9. In Campylobacter jejuni subsp. doylei (strain ATCC BAA-1458 / RM4099 / 269.97), this protein is Histidinol-phosphate aminotransferase.